Reading from the N-terminus, the 118-residue chain is Ribonuclease P protein component (118 aa).

Belongs to the RnpA family. In terms of assembly, consists of a catalytic RNA component (M1 or rnpB) and a protein subunit.

The catalysed reaction is Endonucleolytic cleavage of RNA, removing 5'-extranucleotides from tRNA precursor.. In terms of biological role, RNaseP catalyzes the removal of the 5'-leader sequence from pre-tRNA to produce the mature 5'-terminus. It can also cleave other RNA substrates such as 4.5S RNA. The protein component plays an auxiliary but essential role in vivo by binding to the 5'-leader sequence and broadening the substrate specificity of the ribozyme. This chain is Ribonuclease P protein component, found in Rickettsia conorii (strain ATCC VR-613 / Malish 7).